The chain runs to 369 residues: Tetraacyldisaccharide 4'-kinase (369 aa).

V68–T75 is a binding site for ATP.

It belongs to the LpxK family.

The enzyme catalyses a lipid A disaccharide + ATP = a lipid IVA + ADP + H(+). It participates in glycolipid biosynthesis; lipid IV(A) biosynthesis; lipid IV(A) from (3R)-3-hydroxytetradecanoyl-[acyl-carrier-protein] and UDP-N-acetyl-alpha-D-glucosamine: step 6/6. Its function is as follows. Transfers the gamma-phosphate of ATP to the 4'-position of a tetraacyldisaccharide 1-phosphate intermediate (termed DS-1-P) to form tetraacyldisaccharide 1,4'-bis-phosphate (lipid IVA). This Chlamydia trachomatis serovar D (strain ATCC VR-885 / DSM 19411 / UW-3/Cx) protein is Tetraacyldisaccharide 4'-kinase.